Consider the following 100-residue polypeptide: Small ribosomal subunit protein uS14c (100 aa).

It belongs to the universal ribosomal protein uS14 family. As to quaternary structure, part of the 30S ribosomal subunit.

It localises to the plastid. The protein localises to the chloroplast. In terms of biological role, binds 16S rRNA, required for the assembly of 30S particles. The sequence is that of Small ribosomal subunit protein uS14c from Gossypium barbadense (Sea Island cotton).